Consider the following 544-residue polypeptide: Lariat debranching enzyme (544 aa).

Cys-8, His-10, Asp-39, and Asn-84 together coordinate a divalent metal cation. A lariat recognition loop region spans residues Ser-124 to Arg-154. Lys-128 is subject to N6-acetyllysine. Positions 174, 226, and 228 each coordinate a divalent metal cation. Positions Glu-395 to Ser-412 are enriched in acidic residues. A disordered region spans residues Glu-395–Ala-463. Positions Glu-413 to Asn-425 are enriched in polar residues. Residues Ile-429 to Ser-439 are compositionally biased toward acidic residues. The segment covering Ser-445–Ala-463 has biased composition (polar residues). 7 positions are modified to phosphoserine: Ser-464, Ser-474, Ser-478, Ser-479, Ser-485, Ser-499, and Ser-514. A disordered region spans residues Ile-476 to Ala-544. Residues Arg-512–Arg-522 show a composition bias toward basic and acidic residues.

It belongs to the lariat debranching enzyme family. The cofactor is Fe(2+). Requires Zn(2+) as cofactor. It depends on Mn(2+) as a cofactor. Ubiquitously expressed, strongest expression in the spinal cord and brainstem.

It is found in the nucleus. Its activity is regulated as follows. Active in presence of diverse metals including Fe(2+), Zn(2+), Mn(2+). Also activated by Ca(2+). Binds two metal cations in two adjacent alpha and beta metal-binding pockets. Cleaves the 2'-5' phosphodiester linkage at the branch point of excised lariat intron RNA and converts them into linear molecules that can be subsequently degraded, thereby facilitating ribonucleotide turnover. Linked to its role in pre-mRNA processing mechanism, may also participate in retrovirus replication via an RNA lariat intermediate in cDNA synthesis and have an antiviral cell-intrinsic defense function in the brainstem. This Homo sapiens (Human) protein is Lariat debranching enzyme (DBR1).